The sequence spans 234 residues: 7-cyano-7-deazaguanine synthase (234 aa).

15–25 (LSGGLDSSTCL) contacts ATP. Positions 199, 208, 211, and 214 each coordinate Zn(2+).

Belongs to the QueC family. Zn(2+) is required as a cofactor.

It carries out the reaction 7-carboxy-7-deazaguanine + NH4(+) + ATP = 7-cyano-7-deazaguanine + ADP + phosphate + H2O + H(+). Its pathway is purine metabolism; 7-cyano-7-deazaguanine biosynthesis. In terms of biological role, catalyzes the ATP-dependent conversion of 7-carboxy-7-deazaguanine (CDG) to 7-cyano-7-deazaguanine (preQ(0)). This is 7-cyano-7-deazaguanine synthase from Anaeromyxobacter dehalogenans (strain 2CP-C).